A 469-amino-acid polypeptide reads, in one-letter code: 3-isopropylmalate dehydratase large subunit (469 aa).

Residues cysteine 347, cysteine 407, and cysteine 410 each coordinate [4Fe-4S] cluster.

This sequence belongs to the aconitase/IPM isomerase family. LeuC type 1 subfamily. As to quaternary structure, heterodimer of LeuC and LeuD. [4Fe-4S] cluster serves as cofactor.

It catalyses the reaction (2R,3S)-3-isopropylmalate = (2S)-2-isopropylmalate. The protein operates within amino-acid biosynthesis; L-leucine biosynthesis; L-leucine from 3-methyl-2-oxobutanoate: step 2/4. Catalyzes the isomerization between 2-isopropylmalate and 3-isopropylmalate, via the formation of 2-isopropylmaleate. This chain is 3-isopropylmalate dehydratase large subunit, found in Proteus mirabilis (strain HI4320).